Here is a 107-residue protein sequence, read N- to C-terminus: Replication initiation control protein YabA (107 aa).

Zn(2+) contacts are provided by His-81, Cys-83, Cys-97, and Cys-100.

The protein belongs to the YabA family. In terms of assembly, homotetramer. Interacts with both DnaA and DnaN, acting as a bridge between these two proteins. Zn(2+) serves as cofactor.

It localises to the cytoplasm. It is found in the nucleoid. Involved in control of chromosome replication initiation. Inhibits the cooperative binding of DnaA to the oriC region, thus negatively regulating initiation of chromosome replication. Inhibits the ability of DnaA-ATP to form a helix on DNA; does not disassemble preformed DnaA-DNA helices. Decreases the residence time of DnaA on the chromosome at its binding sites (oriC, replication forks and promoter-binding sites). Tethers DnaA to the replication machinery via the DNA polymerase beta sliding clamp subunit (dnaN). Associates with oriC and other DnaA targets on the chromosome in a DnaA-dependent manner. The chain is Replication initiation control protein YabA from Streptococcus equi subsp. equi (strain 4047).